The following is a 423-amino-acid chain: Glutamate-1-semialdehyde 2,1-aminomutase (423 aa).

Lysine 262 is modified (N6-(pyridoxal phosphate)lysine).

This sequence belongs to the class-III pyridoxal-phosphate-dependent aminotransferase family. HemL subfamily. As to quaternary structure, homodimer. Pyridoxal 5'-phosphate serves as cofactor.

The protein resides in the cytoplasm. It catalyses the reaction (S)-4-amino-5-oxopentanoate = 5-aminolevulinate. It participates in porphyrin-containing compound metabolism; protoporphyrin-IX biosynthesis; 5-aminolevulinate from L-glutamyl-tRNA(Glu): step 2/2. The protein is Glutamate-1-semialdehyde 2,1-aminomutase of Saccharophagus degradans (strain 2-40 / ATCC 43961 / DSM 17024).